Reading from the N-terminus, the 802-residue chain is Putative transcriptional regulator cudA (802 aa).

4 disordered regions span residues 1–148 (MNQS…PSAI), 154–173 (ISNN…NLLL), 381–446 (NNIN…NNEN), and 636–658 (QPQQ…QQGQ). The segment covering 25–63 (NNNNNGNNGMMMNQQQMQQHVVPHLHHLQQQQQQPQQQQ) has biased composition (low complexity). The segment covering 69–88 (DYSNSPNGTTNGSTMSPNCI) has biased composition (polar residues). Positions 89–128 (NTNNNNNNNNNNNNNSNNNNNNNNNASNNLTSNKSSSTNT) are enriched in low complexity. The span at 129-142 (PQIGQLQASPANLT) shows a compositional bias: polar residues. Low complexity predominate over residues 381 to 445 (NNINNNNNIN…CNNNNNNNNE (65 aa)).

In terms of tissue distribution, expressed in the prestalk cells that constitute the slug tip (pstA cells) and in prespore cells (at protein level). Not expressed in the band of prestalk cells that lies behind the slug tip (pstO cells). Highly expressed in pstO derived papilla cells during culmination.

Its subcellular location is the nucleus. The protein resides in the nucleoplasm. Its function is as follows. Essential for normal culmination. May function as a transcriptional regulator. This chain is Putative transcriptional regulator cudA (cudA), found in Dictyostelium discoideum (Social amoeba).